The following is a 606-amino-acid chain: Methionine--tRNA ligase (606 aa).

Positions 14-24 (PYANGPRHIGH) match the 'HIGH' region motif. Cys146, Cys149, Cys159, and Cys162 together coordinate Zn(2+). The 'KMSKS' region motif lies at 351–355 (KFSSS). Ser354 is an ATP binding site.

This sequence belongs to the class-I aminoacyl-tRNA synthetase family. MetG type 1 subfamily. As to quaternary structure, monomer. Requires Zn(2+) as cofactor.

The protein localises to the cytoplasm. It catalyses the reaction tRNA(Met) + L-methionine + ATP = L-methionyl-tRNA(Met) + AMP + diphosphate. Is required not only for elongation of protein synthesis but also for the initiation of all mRNA translation through initiator tRNA(fMet) aminoacylation. This chain is Methionine--tRNA ligase, found in Thermobifida fusca (strain YX).